A 384-amino-acid polypeptide reads, in one-letter code: Interstitial collagenase (384 aa).

Positions 1-25 are cleaved as a signal peptide; that stretch reads MLSGLWSSILALLGVFLQSVGEFRA. Positions 26–88 are cleaved as a propeptide — activation peptide; sequence ETQEQDVEIV…STCGVPDVGE (63 aa). The Cysteine switch signature appears at 79-86; it reads STCGVPDV. Position 81 (cysteine 81) interacts with Zn(2+). Ca(2+) contacts are provided by aspartate 113 and aspartate 129. Histidine 139 and aspartate 141 together coordinate Zn(2+). Residues aspartate 146, glycine 147, glycine 149, and asparagine 151 each contribute to the Ca(2+) site. Residue histidine 154 coordinates Zn(2+). Glycine 161, glycine 163, and aspartate 165 together coordinate Ca(2+). Histidine 167 contacts Zn(2+). Ca(2+)-binding residues include aspartate 169, glutamate 170, and glutamate 172. Residue histidine 189 coordinates Zn(2+). Glutamate 190 is a catalytic residue. Residues histidine 193 and histidine 199 each contribute to the Zn(2+) site. The tract at residues 218–239 is disordered; that stretch reads LSQDDIDGPSGNPVQPRGPQTP. Cysteine 242 and cysteine 381 are disulfide-bonded. Ca(2+) is bound by residues aspartate 249, glutamine 277, and aspartate 347. 2 Hemopexin repeats span residues 273-319 and 333-381; these read ELGL…FGFP and KQSM…WFNC.

Belongs to the peptidase M10A family. Requires Ca(2+) as cofactor. It depends on Zn(2+) as a cofactor.

It localises to the secreted. It is found in the extracellular space. The protein resides in the extracellular matrix. It catalyses the reaction Cleavage of the triple helix of collagen at about three-quarters of the length of the molecule from the N-terminus, at 775-Gly-|-Ile-776 in the alpha1(I) chain. Cleaves synthetic substrates and alpha-macroglobulins at bonds where P1' is a hydrophobic residue.. With respect to regulation, can be activated without removal of the activation peptide. Its function is as follows. Cleaves collagens of types I, II, and III at one site in the helical domain. Also cleaves collagens of types VII and X. The chain is Interstitial collagenase from Aquarana catesbeiana (American bullfrog).